Here is a 594-residue protein sequence, read N- to C-terminus: UvrABC system protein C (594 aa).

Residues 17 to 94 (LEPGCYLMKD…IKQYQPRYNI (78 aa)) form the GIY-YIG domain. In terms of domain architecture, UVR spans 199–234 (KTILHHLEDRMNKASEQLDFEQAKEYRDMIQHIHNL).

It belongs to the UvrC family. As to quaternary structure, interacts with UvrB in an incision complex.

It is found in the cytoplasm. Functionally, the UvrABC repair system catalyzes the recognition and processing of DNA lesions. UvrC both incises the 5' and 3' sides of the lesion. The N-terminal half is responsible for the 3' incision and the C-terminal half is responsible for the 5' incision. This Staphylococcus epidermidis (strain ATCC 12228 / FDA PCI 1200) protein is UvrABC system protein C.